The chain runs to 333 residues: Biotin synthase (333 aa).

In terms of domain architecture, Radical SAM core spans 40–269 (YRVQLASLLS…HARVRLSAGR (230 aa)). Cys-55, Cys-59, and Cys-62 together coordinate [4Fe-4S] cluster. [2Fe-2S] cluster-binding residues include Cys-100, Cys-132, Cys-192, and Arg-264.

It belongs to the radical SAM superfamily. Biotin synthase family. In terms of assembly, homodimer. [4Fe-4S] cluster is required as a cofactor. Requires [2Fe-2S] cluster as cofactor.

It catalyses the reaction (4R,5S)-dethiobiotin + (sulfur carrier)-SH + 2 reduced [2Fe-2S]-[ferredoxin] + 2 S-adenosyl-L-methionine = (sulfur carrier)-H + biotin + 2 5'-deoxyadenosine + 2 L-methionine + 2 oxidized [2Fe-2S]-[ferredoxin]. The protein operates within cofactor biosynthesis; biotin biosynthesis; biotin from 7,8-diaminononanoate: step 2/2. Catalyzes the conversion of dethiobiotin (DTB) to biotin by the insertion of a sulfur atom into dethiobiotin via a radical-based mechanism. The protein is Biotin synthase of Synechococcus sp. (strain CC9902).